Reading from the N-terminus, the 37-residue chain is Large ribosomal subunit protein bL36 (37 aa).

Belongs to the bacterial ribosomal protein bL36 family.

The sequence is that of Large ribosomal subunit protein bL36 from Moorella thermoacetica (strain ATCC 39073 / JCM 9320).